The primary structure comprises 1075 residues: DNA-directed RNA polymerase subunit beta (1075 aa).

This sequence belongs to the RNA polymerase beta chain family. As to quaternary structure, in plastids the minimal PEP RNA polymerase catalytic core is composed of four subunits: alpha, beta, beta', and beta''. When a (nuclear-encoded) sigma factor is associated with the core the holoenzyme is formed, which can initiate transcription.

The protein localises to the plastid. The protein resides in the chloroplast. The enzyme catalyses RNA(n) + a ribonucleoside 5'-triphosphate = RNA(n+1) + diphosphate. Functionally, DNA-dependent RNA polymerase catalyzes the transcription of DNA into RNA using the four ribonucleoside triphosphates as substrates. The protein is DNA-directed RNA polymerase subunit beta of Oryza sativa (Rice).